The chain runs to 215 residues: Probable nicotinate-nucleotide adenylyltransferase (215 aa).

Belongs to the NadD family.

The enzyme catalyses nicotinate beta-D-ribonucleotide + ATP + H(+) = deamido-NAD(+) + diphosphate. It functions in the pathway cofactor biosynthesis; NAD(+) biosynthesis; deamido-NAD(+) from nicotinate D-ribonucleotide: step 1/1. Its function is as follows. Catalyzes the reversible adenylation of nicotinate mononucleotide (NaMN) to nicotinic acid adenine dinucleotide (NaAD). In Coxiella burnetii (strain RSA 331 / Henzerling II), this protein is Probable nicotinate-nucleotide adenylyltransferase.